The sequence spans 485 residues: Glutamyl-tRNA(Gln) amidotransferase subunit A (485 aa).

Residues Lys79 and Ser154 each act as charge relay system in the active site. The active-site Acyl-ester intermediate is the Ser178.

It belongs to the amidase family. GatA subfamily. In terms of assembly, heterotrimer of A, B and C subunits.

The catalysed reaction is L-glutamyl-tRNA(Gln) + L-glutamine + ATP + H2O = L-glutaminyl-tRNA(Gln) + L-glutamate + ADP + phosphate + H(+). Its function is as follows. Allows the formation of correctly charged Gln-tRNA(Gln) through the transamidation of misacylated Glu-tRNA(Gln) in organisms which lack glutaminyl-tRNA synthetase. The reaction takes place in the presence of glutamine and ATP through an activated gamma-phospho-Glu-tRNA(Gln). The sequence is that of Glutamyl-tRNA(Gln) amidotransferase subunit A from Desulforamulus reducens (strain ATCC BAA-1160 / DSM 100696 / MI-1) (Desulfotomaculum reducens).